Consider the following 364-residue polypeptide: Cell cycle control protein 50A (364 aa).

The tract at residues 1-28 (MAMNYSAKDEVDGGPAGPPGGAAKTRRP) is disordered. N-acetylalanine is present on A2. At 2 to 49 (AMNYSAKDEVDGGPAGPPGGAAKTRRPDNTAFKQQRLPAWQPILTAGT) the chain is on the cytoplasmic side. Residues 50-70 (VLPTFFIIGLIFIPIGIGIFV) form a helical membrane-spanning segment. The Exoplasmic loop portion of the chain corresponds to 71–328 (TSNNIREIEI…SWMGGKNPFL (258 aa)). 3 disulfide bridges follow: C91/C104, C94/C102, and C157/C171. N-linked (GlcNAc...) asparagine glycosylation is present at N98. N297 carries an N-linked (GlcNAc...) asparagine glycan. A helical transmembrane segment spans residues 329-349 (GIAYITIGSISFLLGVVLLVI). The Cytoplasmic segment spans residues 350–364 (NHKYRNSSNTADITI).

This sequence belongs to the CDC50/LEM3 family. Component of various P4-ATPase flippase complexes which consists of a catalytic alpha subunit and an accessory beta subunit. Interacts with ATP8A1 to form a flippase complex; this complex forms an intermediate phosphoenzyme. The ATP8A2:TMEM30A flippase complex has been purified, and ATP8B1:TMEM30A and ATP8B2:TMEM30A flippase complexes have been shown to form intermediate phosphoenzymes in vitro. Interacts with alpha subunits ATP8A1, ATP8B1, ATP8B2, ATP8B4, ATP10A, ATP10B, ATP10D, ATP11A, ATP11B and ATP11C. N-glycosylated. Contains high mannose-type oligosaccharides. Expressed in photoreceptor cells; detected in retina outer segment (at protein level). Detected in hepatocytes liver sinusoidal endothelial cells and kidney brush border of the proximal tubules (at protein level). Expressed in brain (at protein level).

The protein localises to the membrane. It is found in the cell membrane. The protein resides in the golgi apparatus. It localises to the cytoplasmic vesicle. Its subcellular location is the secretory vesicle membrane. The protein localises to the apical cell membrane. Functionally, accessory component of a P4-ATPase flippase complex which catalyzes the hydrolysis of ATP coupled to the transport of aminophospholipids from the outer to the inner leaflet of various membranes and ensures the maintenance of asymmetric distribution of phospholipids. Phospholipid translocation also seems to be implicated in vesicle formation and in uptake of lipid signaling molecules. The beta subunit may assist in binding of the phospholipid substrate. Required for the proper folding, assembly and ER to Golgi exit of the ATP8A2:TMEM30A flippase complex. ATP8A2:TMEM30A may be involved in regulation of neurite outgrowth, and, reconstituted to liposomes, predomiminantly transports phosphatidylserine (PS) and to a lesser extent phosphatidylethanolamine (PE). The ATP8A1:TMEM30A flippase complex seems to play a role in regulation of cell migration probably involving flippase-mediated translocation of phosphatidylethanolamine (PE) at the plasma membrane. Required for the formation of the ATP8A2, ATP8B1 and ATP8B2 P-type ATPAse intermediate phosphoenzymes. Involved in uptake of platelet-activating factor (PAF). Can also mediate the export of alpha subunits ATP8A1, ATP8B1, ATP8B2, ATP8B4, ATP10A, ATP10B, ATP10D, ATP11A, ATP11B and ATP11C from the ER to other membrane localizations. This chain is Cell cycle control protein 50A, found in Mus musculus (Mouse).